We begin with the raw amino-acid sequence, 354 residues long: MAELKNDRYLRALLKQPVDRTPVWMMRQAGRYLPEYKATRAEAGDFMSLCKNQDLACEVTLQPLRRYDLDAAILFSDILTVPDAMGLGLYFEAGEGPRFERPTDTIDSIKKLCIPDPEDELGYVMRAVSTIRRELKGEVPLIGFSGSPWTLATYMVEGGSSKAFEKIKKMAYEEPATLHMLLDKLADSVTLYLNAQVANGAQSLMIFDSWGGALSHHAYREFSLRYMQKIVDGLTRHADGRQVPVTLFTKGGGLWLESMAETGCDALGLDWTVDIGDARRRVGHKVALQGNMDPSVLYGTPERIHQEVDQILASYGEGTGHVFNLGHGIHQHVDPERAGSFINSVHELSPQYHK.

Substrate-binding positions include 27 to 31, Asp77, Tyr154, Ser209, and His327; that span reads RQAGR.

It belongs to the uroporphyrinogen decarboxylase family. Homodimer.

Its subcellular location is the cytoplasm. The enzyme catalyses uroporphyrinogen III + 4 H(+) = coproporphyrinogen III + 4 CO2. It functions in the pathway porphyrin-containing compound metabolism; protoporphyrin-IX biosynthesis; coproporphyrinogen-III from 5-aminolevulinate: step 4/4. In terms of biological role, catalyzes the decarboxylation of four acetate groups of uroporphyrinogen-III to yield coproporphyrinogen-III. In Shewanella pealeana (strain ATCC 700345 / ANG-SQ1), this protein is Uroporphyrinogen decarboxylase.